A 371-amino-acid chain; its full sequence is MSFRKVNIIIWVLAVVLFLLVLHHNFLSLSSLLKNDISDSGIVGLQPIDFVASAHQHPVSERQEEIPVVIAASEDRLGGTIAAINSVHQNTRSNVMFYIVTFNSTADHLRSWLNSGSLKSIRYKIVNFDTKLLEGKVKQDPDQGESMKPLTFARFYLPILVPSAKKAIYMDDDVIVQGDILALYNTPLKPGHAAAFSEDCDSASTKVIIRGAGNQYNYIGYLDYKKERIRKLSMKASTCSFNPGVFVANLTEWKRQNVTNQLEKWMKLNVEEGLYSRTLAGSITTPPLLIVFYQQHSTIDPMWNVRHLGSSAGKRYSPQFVKAAKLLHWNGHFKPWGRTASYADVWEKWYIPDPTGKFSLIRRHMDTSNIK.

The Cytoplasmic portion of the chain corresponds to 1–7 (MSFRKVN). Residues 8 to 28 (IIIWVLAVVLFLLVLHHNFLS) form a helical; Signal-anchor for type II membrane protein membrane-spanning segment. Residues 29 to 371 (LSSLLKNDIS…RRHMDTSNIK (343 aa)) are Lumenal-facing. N-linked (GlcNAc...) asparagine glycosylation is present at Asn257.

The protein belongs to the glycosyltransferase 8 family.

The protein resides in the membrane. The protein is Glycosyltransferase 8 domain-containing protein 1 (Glt8d1) of Mus musculus (Mouse).